A 463-amino-acid polypeptide reads, in one-letter code: GTPase Der (463 aa).

EngA-type G domains follow at residues 3 to 166 and 177 to 350; these read PVVA…PESG and IRIA…QSAM. Residues 9–16, 56–60, 118–121, 183–190, 230–234, and 295–298 each bind GTP; these read GRTNVGKS, DTGGI, NKID, GRPNVGKS, DTAGI, and NKWD. The region spanning 351 to 435 is the KH-like domain; it reads LDLSASRLTQ…PLKLVFKSAE (85 aa).

It belongs to the TRAFAC class TrmE-Era-EngA-EngB-Septin-like GTPase superfamily. EngA (Der) GTPase family. Associates with the 50S ribosomal subunit.

Functionally, GTPase that plays an essential role in the late steps of ribosome biogenesis. This Methylococcus capsulatus (strain ATCC 33009 / NCIMB 11132 / Bath) protein is GTPase Der.